The following is a 160-amino-acid chain: Cytochrome b6-f complex subunit 4 (160 aa).

3 helical membrane passes run 36-56 (LLYI…GLAV), 95-115 (LLGI…PFIE), and 131-151 (AVFL…TLPI).

It belongs to the cytochrome b family. PetD subfamily. In terms of assembly, the 4 large subunits of the cytochrome b6-f complex are cytochrome b6, subunit IV (17 kDa polypeptide, PetD), cytochrome f and the Rieske protein, while the 4 small subunits are PetG, PetL, PetM and PetN. The complex functions as a dimer.

The protein resides in the cellular thylakoid membrane. Functionally, component of the cytochrome b6-f complex, which mediates electron transfer between photosystem II (PSII) and photosystem I (PSI), cyclic electron flow around PSI, and state transitions. The sequence is that of Cytochrome b6-f complex subunit 4 from Trichodesmium erythraeum (strain IMS101).